Consider the following 320-residue polypeptide: Olfactory receptor 2AT4 (320 aa).

Over 1–31 (MDATACNESVDGSPVFYLLGIPSLPETFFLP) the chain is Extracellular. N7 carries an N-linked (GlcNAc...) asparagine glycan. Residues 32–52 (VFFIFLLFYLLILMGNALILV) form a helical membrane-spanning segment. The Cytoplasmic segment spans residues 53–62 (AVVAEPSLHK). The helical transmembrane segment at 63-83 (PMYFFLINLSTLDILFTTTTV) threads the bilayer. At 84–102 (PKMLSLFLLGDRFLSFSSC) the chain is on the extracellular side. A disulfide bond links C102 and C184. The helical transmembrane segment at 103 to 123 (LLQMYLFQSFTCSEAFILVVM) threads the bilayer. Over 124-145 (AYDRYVAICHPLHYPVLMNPQT) the chain is Cytoplasmic. The helical transmembrane segment at 146-166 (NATLAASAWLTALLLPIPAVV) threads the bilayer. At 167–200 (RTSQMAYNSIAYIYHCFCDHLAVVQASCSDTTPQ) the chain is on the extracellular side. The chain crosses the membrane as a helical span at residues 201–221 (TLMGFCIAMVVSFLPLLLVLL). Residues 222-245 (SYVHILASVLRISSLEGRAKAFST) lie on the Cytoplasmic side of the membrane. Residues 246-266 (CSSHLLVVGTYYSSIAIAYVA) form a helical membrane-spanning segment. Residues 267-276 (YRADLPLDFH) are Extracellular-facing. A helical transmembrane segment spans residues 277–297 (IMGNVVYAILTPILNPLIYTL). Residues 298-320 (RNRDVKAAITKIMSQDPGCDRSI) are Cytoplasmic-facing.

Belongs to the G-protein coupled receptor 1 family. Detected in the keratinocytes of the epidermis (at protein level). Detected in hair follicles in proximal outer root sheath and hair matrix keratinocytes (at protein level).

The protein localises to the cell membrane. Functionally, olfactory receptor. Activated by the synthetic sandalwood odorant sandalore. Endogenous ligand is unknown. The activity of this receptor is probably mediated by G proteins which induce elevation of intracellular Ca(2+), a cAMP-dependent pathway and phosphorylation of MAPK1/ERK2, MAPK3/ERK1 and p38 MAPKs. Activation of OR2AT4 induces proliferation, migration, and re-epithelialization during wound-healing processes of keratinocytes. Stimulation of OR2AT4 by sandalore promotes hair growth by decreasing apoptosis and increasing production of the anagen-prolonging growth factor IGF1 as well as other pathways involving various kinases. The sequence is that of Olfactory receptor 2AT4 from Homo sapiens (Human).